A 654-amino-acid polypeptide reads, in one-letter code: MICOS complex subunit MIC60-2 (654 aa).

The N-terminal 12 residues, 1 to 12 (MRGSRNLLTQRL), are a transit peptide targeting the mitochondrion. Topologically, residues 13–20 (ASSRATGS) are mitochondrial matrix. Residues 21-43 (SGGLKFVGATVGAVTAGAAGVAG) form a helical membrane-spanning segment. Topologically, residues 44–654 (YASYDNEFRK…AALTSIRSTY (611 aa)) are mitochondrial intermembrane. Over residues 115 to 129 (LKETTEPKKIEKKPE) the composition is skewed to basic and acidic residues. The interval 115-140 (LKETTEPKKIEKKPENPYIGAKTPLN) is disordered.

Belongs to the MICOS complex subunit Mic60 family. In terms of assembly, component of the mitochondrial contact site and cristae organizing system (MICOS) complex. In terms of tissue distribution, expressed in the gonads and muscle cells.

Its subcellular location is the mitochondrion inner membrane. It is found in the cytoplasm. In terms of biological role, sustains mitochondrial morphology probably through maintaining cristae morphology. May act as a component of the MICOS complex, a large protein complex of the mitochondria. The sequence is that of MICOS complex subunit MIC60-2 from Caenorhabditis elegans.